A 123-amino-acid chain; its full sequence is Large ribosomal subunit protein bL12 (123 aa).

Belongs to the bacterial ribosomal protein bL12 family. In terms of assembly, homodimer. Part of the ribosomal stalk of the 50S ribosomal subunit. Forms a multimeric L10(L12)X complex, where L10 forms an elongated spine to which 2 to 4 L12 dimers bind in a sequential fashion. Binds GTP-bound translation factors.

Its function is as follows. Forms part of the ribosomal stalk which helps the ribosome interact with GTP-bound translation factors. Is thus essential for accurate translation. The protein is Large ribosomal subunit protein bL12 of Shewanella sp. (strain ANA-3).